A 398-amino-acid chain; its full sequence is Serine/threonine-protein kinase UL13 (398 aa).

A compositionally biased stretch (gly residues) spans 1–10 (MAAGGGGGGV). A disordered region spans residues 1 to 44 (MAAGGGGGGVSRAALARPPIHRGTSAPGGAIAAAGGDGDGDEAS). Residues 80 to 398 (TGDPVAVGAG…GGARFAELAA (319 aa)) form the Protein kinase domain. ATP is bound by residues 86 to 94 (VGAGSYGSV) and Lys-103. Asp-194 serves as the catalytic Proton acceptor.

Belongs to the protein kinase superfamily. Ser/Thr protein kinase family. Autophosphorylated.

It localises to the virion tegument. Its subcellular location is the host nucleus. The protein resides in the host cytoplasm. It is found in the host endoplasmic reticulum. The catalysed reaction is L-seryl-[protein] + ATP = O-phospho-L-seryl-[protein] + ADP + H(+). It catalyses the reaction L-threonyl-[protein] + ATP = O-phospho-L-threonyl-[protein] + ADP + H(+). Multifunctional serine/threonine kinase that plays a role in several processes including egress of virus particles from the nucleus, modulation of the actin cytoskeleton and regulation of viral and cellular gene expression. Regulates the nuclear localization of viral envelopment factors UL34 and UL31, by phosphorylating the US3 kinase, indicating a role in nuclear egress. Disrupts host nuclear lamins, including LMNA and LMNB1. Phosphorylates the viral Fc receptor composed of glycoproteins E (gE) and I (gI). Phosphorylation of glycoprotein E (gE) by UL13 alters its subcellular localization, from the host early endosome to the plasma membrane. Participates in the transcriptional regulation of cellular and viral mRNAs mainly by phosphorylating the viral transcriptional regulator ICP22. Functions as an antagonist of the host RLR-mediated antiviral responses via suppression of the transcription of cytosolic receptors RIGI and IFIH1. Facilitates immune evasion also by recruiting host RNF5 to initiate the 'Lys-27'-/'Lys-29'-linked polyubiquitination of STING1; leading to its degradation. Blocks host IFN-beta transactivation mediated by the cGAS-STING pathway by phosphorylating host IRF3. In turn, IRF3 binding to the IRF3-responsive promoters and downstream interferon stimulated genes/ISG expression are greatly impaired. Induces the activation of the host DNA damage response via H2AX phosphorylation to improve efficient viral replication and progeny production. This Suid herpesvirus 1 (strain NIA-3) (SuHV-1) protein is Serine/threonine-protein kinase UL13 (UL13).